We begin with the raw amino-acid sequence, 104 residues long: UPF0213 protein YsiG (104 aa).

One can recognise a GIY-YIG domain in the interval 2–79 (NQYFTYILQC…KLVRKQKLSL (78 aa)).

Belongs to the UPF0213 family.

The protein is UPF0213 protein YsiG (ysiG) of Lactococcus lactis subsp. lactis (strain IL1403) (Streptococcus lactis).